Here is a 394-residue protein sequence, read N- to C-terminus: Elongation factor Tu (394 aa).

The tr-type G domain maps to 10 to 204 (KPHVNIGTIG…AVDSYIPQPV (195 aa)). Residues 19–26 (GHVDHGKT) are G1. 19–26 (GHVDHGKT) is a binding site for GTP. Residue Thr26 participates in Mg(2+) binding. Positions 60–64 (GITIS) are G2. Residues 81–84 (DCPG) are G3. Residues 81 to 85 (DCPGH) and 136 to 139 (NKVD) contribute to the GTP site. The segment at 136-139 (NKVD) is G4. The G5 stretch occupies residues 174–176 (SAL).

It belongs to the TRAFAC class translation factor GTPase superfamily. Classic translation factor GTPase family. EF-Tu/EF-1A subfamily. Monomer.

It is found in the cytoplasm. It catalyses the reaction GTP + H2O = GDP + phosphate + H(+). In terms of biological role, GTP hydrolase that promotes the GTP-dependent binding of aminoacyl-tRNA to the A-site of ribosomes during protein biosynthesis. The polypeptide is Elongation factor Tu (Rickettsia montanensis).